A 124-amino-acid chain; its full sequence is Protein S100-A16 (124 aa).

The EF-hand 1; degenerate domain occupies 23–37 (VSKHSLVKNKISKSS). Positions 54 to 89 (GNRKAADKLIQNLDANHDGRICFDEYWTMIGGITSP) constitute an EF-hand 2 domain. Residues Asp-67, Asn-69, Asp-71, Arg-73, and Glu-78 each contribute to the Ca(2+) site. The disordered stretch occupies residues 97–124 (QECQQESQQECQQESQQESQQESQQGSS).

The protein belongs to the S-100 family. In terms of assembly, homodimer. Interacts with TP53. Ubiquitous. Widely distributed throughout the adult brain and predominantly expressed within specific astrocyte populations. Expressed at high level in adipose tissues of obese animals.

It localises to the nucleus. It is found in the nucleolus. The protein localises to the cytoplasm. Functionally, calcium-binding protein. Binds one calcium ion per monomer. Can promote differentiation of adipocytes (in vitro). Overexpression in 3T3-L1 preadipocytes increases their proliferation, enhances adipogenesis and reduces insulin-stimulated glucose uptake. The chain is Protein S100-A16 from Mus musculus (Mouse).